The chain runs to 730 residues: Rap1 GTPase-activating protein 2 (730 aa).

Residue Ser7 is modified to Phosphoserine; by PKG/PRKG1; in vitro. Residues Ala32–Thr53 are disordered. The residue at position 45 (Ser45) is a Phosphoserine. At Thr49 the chain carries Phosphothreonine. The Rap-GAP domain occupies Ile248–Leu464. Ser507 is modified (phosphoserine). A disordered region spans residues Glu509 to His533. A phosphoserine mark is found at Ser544, Ser558, Ser564, Ser612, and Ser613. Positions Val552 to His730 are disordered. Residues Asp585 to Ser613 show a composition bias toward polar residues. The span at Pro618–Gly631 shows a compositional bias: basic and acidic residues. The segment covering Ser635 to Thr647 has biased composition (low complexity). The span at Gly661–Phe670 shows a compositional bias: polar residues. Positions Ser678–Ser687 are enriched in low complexity. Polar residues predominate over residues Arg699–Ser712.

In vitro phosphorylated by cGMP-dependent protein kinase 1 (cGKI) at Ser-7; the phosphorylation probably does not regulate GAP activity. Isoform 1 and isoform 2 are expressed in platelets with isoform 2 being the predominant form. Expressed in lymphocytes, heart, testis and pancreas.

Its subcellular location is the cytoplasm. It is found in the perinuclear region. Functionally, GTPase activator for the nuclear Ras-related regulatory protein RAP-1A (KREV-1), converting it to the putatively inactive GDP-bound state. This is Rap1 GTPase-activating protein 2 (RAP1GAP2) from Homo sapiens (Human).